We begin with the raw amino-acid sequence, 138 residues long: Dual specificity phosphatase ibp1 (138 aa).

The Rhodanese domain occupies 19 to 133; the sequence is SPNEISIIDV…WKRRYGGQQG (115 aa). C70 functions as the Phosphocysteine intermediate in the catalytic mechanism.

The protein belongs to the MPI phosphatase family.

The protein resides in the cytoplasm. The protein localises to the nucleus. It carries out the reaction O-phospho-L-tyrosyl-[protein] + H2O = L-tyrosyl-[protein] + phosphate. In terms of biological role, may play a role in DNA replication checkpoint via regulation of hsk1 or may act downstream of hsk1 in an S phase regulatory pathway. This chain is Dual specificity phosphatase ibp1 (ibp1), found in Schizosaccharomyces pombe (strain 972 / ATCC 24843) (Fission yeast).